Reading from the N-terminus, the 481-residue chain is 3-ketoacyl-CoA synthase 8 (481 aa).

Transmembrane regions (helical) follow at residues 4–24 (LKMV…AMKG) and 44–64 (LQTI…YMLT). The region spanning 61 to 358 (YMLTRPKPVY…FFITFVKKKY (298 aa)) is the FAE domain. Catalysis depends on residues C213, H292, H376, H380, H409, and N413.

The protein belongs to the thiolase-like superfamily. Chalcone/stilbene synthases family. In terms of tissue distribution, expressed in leaves and seedlings.

It is found in the endoplasmic reticulum membrane. It carries out the reaction a very-long-chain acyl-CoA + malonyl-CoA + H(+) = a very-long-chain 3-oxoacyl-CoA + CO2 + CoA. It functions in the pathway lipid metabolism; fatty acid biosynthesis. This is 3-ketoacyl-CoA synthase 8 from Arabidopsis thaliana (Mouse-ear cress).